The sequence spans 629 residues: Chaperone protein HtpG (629 aa).

The tract at residues Met-1 to Arg-343 is a; substrate-binding. A b region spans residues Glu-344–Arg-558. The segment at Met-559–Val-629 is c.

This sequence belongs to the heat shock protein 90 family. In terms of assembly, homodimer.

The protein resides in the cytoplasm. Its function is as follows. Molecular chaperone. Has ATPase activity. This is Chaperone protein HtpG from Polaromonas naphthalenivorans (strain CJ2).